A 209-amino-acid chain; its full sequence is Yop proteins translocation protein K (209 aa).

Functionally, belongs to an operon involved in the translocation of Yop proteins across the bacterial membranes or in the specific control of this function. This Yersinia enterocolitica protein is Yop proteins translocation protein K (yscK).